The chain runs to 410 residues: Eukaryotic initiation factor 4A (410 aa).

Positions glutamate 37–glutamine 65 match the Q motif motif. The Helicase ATP-binding domain maps to isoleucine 68–isoleucine 238. ATP is bound at residue alanine 81–threonine 88. Residues aspartate 186–aspartate 189 carry the DEAD box motif. One can recognise a Helicase C-terminal domain in the interval glycine 249 to leucine 410.

This sequence belongs to the DEAD box helicase family. eIF4A subfamily. EIF4F is a multi-subunit complex, the composition of which varies with external and internal environmental conditions. It is composed of at least EIF4A, EIF4E and EIF4G.

It catalyses the reaction ATP + H2O = ADP + phosphate + H(+). Its function is as follows. ATP-dependent RNA helicase which is a subunit of the eIF4F complex involved in cap recognition and is required for mRNA binding to ribosome. In the current model of translation initiation, eIF4A unwinds RNA secondary structures in the 5'-UTR of mRNAs which is necessary to allow efficient binding of the small ribosomal subunit, and subsequent scanning for the initiator codon. The polypeptide is Eukaryotic initiation factor 4A (Zea mays (Maize)).